Here is a 384-residue protein sequence, read N- to C-terminus: Brix domain-containing protein F44G4.1 (384 aa).

Disordered regions lie at residues 1-58 (MAPK…KVVK) and 82-135 (SKAT…PQKE). Positions 18 to 48 (FVEEEVTGDVDEDGFEQAEDMPDEVDSDEDE) are enriched in acidic residues. Residues 96 to 114 (LPKSQRGKALKRALRKDKR) show a composition bias toward basic residues. Positions 115 to 127 (ARQGERAQIRDEL) are enriched in basic and acidic residues. One can recognise a Brix domain in the interval 177–360 (PKVMITMTPK…LKWLQKGTFD (184 aa)).

This is Brix domain-containing protein F44G4.1 from Caenorhabditis elegans.